A 208-amino-acid chain; its full sequence is Large ribosomal subunit protein uL3 (208 aa).

The tract at residues 134–159 is disordered; the sequence is SKFHREAGSTGHCTTPGRSFKNTTMP. A compositionally biased stretch (polar residues) spans 144–158; sequence GHCTTPGRSFKNTTM.

The protein belongs to the universal ribosomal protein uL3 family. In terms of assembly, part of the 50S ribosomal subunit. Forms a cluster with proteins L14 and L19.

Functionally, one of the primary rRNA binding proteins, it binds directly near the 3'-end of the 23S rRNA, where it nucleates assembly of the 50S subunit. The polypeptide is Large ribosomal subunit protein uL3 (Treponema denticola (strain ATCC 35405 / DSM 14222 / CIP 103919 / JCM 8153 / KCTC 15104)).